The chain runs to 425 residues: Pleckstrin homology domain-containing family A member 2 (425 aa).

The PH 1 domain maps to 7–113 (QNRICGFLDI…WVEALNQASK (107 aa)). Residue K141 forms a Glycyl lysine isopeptide (Lys-Gly) (interchain with G-Cter in SUMO2) linkage. S184 is modified (phosphoserine). Residues 198 to 298 (PLIKSGYCVK…WIKEIGAAVQ (101 aa)) form the PH 2 domain. Residues 312–330 (SISLTRPGSSSLSSGPNSI) are compositionally biased toward low complexity. Residues 312 to 332 (SISLTRPGSSSLSSGPNSILC) form a disordered region. Residues S314 and S349 each carry the phosphoserine modification. Positions 352-425 (SSWQPWTPVP…DDENIRTSDV (74 aa)) are disordered. A compositionally biased stretch (basic and acidic residues) spans 400–410 (RSEPQHPKEKP).

In terms of assembly, binds MPDZ and PTPN13. As to expression, highly expressed in heart, kidney, spleen and peripheral blood leukocytes. Detected at lower levels in brain, skeletal muscle, colon, thymus, liver, small intestine, placenta and lung.

It localises to the cytoplasm. Its subcellular location is the cell membrane. The protein resides in the nucleus. Its function is as follows. Binds specifically to phosphatidylinositol 3,4-diphosphate (PtdIns3,4P2), but not to other phosphoinositides. May recruit other proteins to the plasma membrane. The sequence is that of Pleckstrin homology domain-containing family A member 2 (PLEKHA2) from Homo sapiens (Human).